The following is a 400-amino-acid chain: DNA polymerase IV (400 aa).

The region spanning 8–191 (ILLCDANSFF…LPVRELFGIG (184 aa)) is the UmuC domain. Residues D12 and D109 each contribute to the Mg(2+) site. Residue E110 is part of the active site.

The protein belongs to the DNA polymerase type-Y family. Monomer. Mg(2+) serves as cofactor.

It is found in the cytoplasm. The enzyme catalyses DNA(n) + a 2'-deoxyribonucleoside 5'-triphosphate = DNA(n+1) + diphosphate. Poorly processive, error-prone DNA polymerase involved in untargeted mutagenesis. Copies undamaged DNA at stalled replication forks, which arise in vivo from mismatched or misaligned primer ends. These misaligned primers can be extended by PolIV. Exhibits no 3'-5' exonuclease (proofreading) activity. May be involved in translesional synthesis, in conjunction with the beta clamp from PolIII. The sequence is that of DNA polymerase IV from Moorella thermoacetica (strain ATCC 39073 / JCM 9320).